Consider the following 414-residue polypeptide: CCA-adding enzyme (414 aa).

Residues glycine 8 and arginine 11 each coordinate ATP. Residues glycine 8 and arginine 11 each coordinate CTP. Positions 21 and 23 each coordinate Mg(2+). ATP contacts are provided by arginine 92, arginine 138, and arginine 141. CTP contacts are provided by arginine 92, arginine 138, and arginine 141.

The protein belongs to the tRNA nucleotidyltransferase/poly(A) polymerase family. Bacterial CCA-adding enzyme type 2 subfamily. The cofactor is Mg(2+).

It catalyses the reaction a tRNA precursor + 2 CTP + ATP = a tRNA with a 3' CCA end + 3 diphosphate. The catalysed reaction is a tRNA with a 3' CCA end + 2 CTP + ATP = a tRNA with a 3' CCACCA end + 3 diphosphate. Functionally, catalyzes the addition and repair of the essential 3'-terminal CCA sequence in tRNAs without using a nucleic acid template. Adds these three nucleotides in the order of C, C, and A to the tRNA nucleotide-73, using CTP and ATP as substrates and producing inorganic pyrophosphate. tRNA 3'-terminal CCA addition is required both for tRNA processing and repair. Also involved in tRNA surveillance by mediating tandem CCA addition to generate a CCACCA at the 3' terminus of unstable tRNAs. While stable tRNAs receive only 3'-terminal CCA, unstable tRNAs are marked with CCACCA and rapidly degraded. In Buchnera aphidicola subsp. Cinara cedri (strain Cc), this protein is CCA-adding enzyme.